Reading from the N-terminus, the 759-residue chain is Spindle pole body component alp16 (759 aa).

Interacts with gamma-tubulin.

It is found in the cytoplasm. Its subcellular location is the cytoskeleton. The protein localises to the microtubule organizing center. The protein resides in the spindle pole body. Component of the gamma tubule complex that is required for the regulation of both interphase microtubules and mitotic bipolar spindles. This Schizosaccharomyces pombe (strain 972 / ATCC 24843) (Fission yeast) protein is Spindle pole body component alp16 (alp16).